A 441-amino-acid chain; its full sequence is Synaptotagmin-1 (441 aa).

Residues 1 to 69 lie on the Vesicular side of the membrane; it reads MVKLDFSSQD…DVVKEKVMQQ (69 aa). Residues 70–96 form a helical membrane-spanning segment; that stretch reads TGMPEWAFVFLGFVFILLVLACAFCLI. The Cytoplasmic segment spans residues 97 to 441; it reads RKLFGKKRHG…EEGDKKDDKK (345 aa). 2 consecutive C2 domains span residues 159–278 and 292–425; these read KLGR…EEWK and SLGD…AQWH. Ca(2+) contacts are provided by Asp-190, Asp-196, Asp-248, Phe-249, Asp-250, Ser-253, Lys-254, Asp-256, Asp-323, Asp-329, Asp-383, Asp-385, and Asp-391.

This sequence belongs to the synaptotagmin family. It depends on Ca(2+) as a cofactor. As to expression, localized to regions known to be rich in synapses and appears to be associated with synaptic vesicles. Also found in some non-neuronal secretory structures.

Its subcellular location is the cytoplasmic vesicle. It localises to the secretory vesicle. It is found in the synaptic vesicle membrane. The protein localises to the synapse. May have a regulatory role in the membrane interactions during trafficking of synaptic vesicles at the active zone of the synapse. It binds acidic phospholipids with a specificity that requires the presence of both an acidic head group and a diacyl backbone. Involved in necrotic cell death. The polypeptide is Synaptotagmin-1 (snt-1) (Caenorhabditis elegans).